A 255-amino-acid polypeptide reads, in one-letter code: 5'-nucleotidase SurE (255 aa).

A divalent metal cation is bound by residues Asp8, Asp9, Ser39, and Asn91.

Belongs to the SurE nucleotidase family. A divalent metal cation serves as cofactor.

The protein localises to the cytoplasm. It carries out the reaction a ribonucleoside 5'-phosphate + H2O = a ribonucleoside + phosphate. In terms of biological role, nucleotidase that shows phosphatase activity on nucleoside 5'-monophosphates. The polypeptide is 5'-nucleotidase SurE (Acinetobacter baumannii (strain SDF)).